The following is a 196-amino-acid chain: Indolepyruvate oxidoreductase subunit IorB (196 aa).

As to quaternary structure, heterodimer of the IorA and IorB subunits.

The catalysed reaction is indole-3-pyruvate + 2 oxidized [2Fe-2S]-[ferredoxin] + CoA = (indol-3-yl)acetyl-CoA + 2 reduced [2Fe-2S]-[ferredoxin] + CO2 + H(+). Its function is as follows. Catalyzes the ferredoxin-dependent oxidative decarboxylation of arylpyruvates. This chain is Indolepyruvate oxidoreductase subunit IorB (iorB), found in Methanothermobacter thermautotrophicus (strain ATCC 29096 / DSM 1053 / JCM 10044 / NBRC 100330 / Delta H) (Methanobacterium thermoautotrophicum).